We begin with the raw amino-acid sequence, 323 residues long: CD-NTase-associated protein 12 (323 aa).

The 117-residue stretch at 4 to 120 folds into the TIR domain; that stretch reads RIFIGSSSEQ…LDGITVAKFT (117 aa). Residue glutamate 84 is part of the active site. The segment at 154–323 is STING domain; the sequence is STALAIGYYN…YVNVLTNVKL (170 aa). The 3',3'-c-di-GMP site is built by serine 164, phenylalanine 165, arginine 234, proline 237, aspartate 259, serine 262, and threonine 263.

This sequence in the C-terminal section; belongs to the bacterial STING family. Forms homodimers which subsequently form filaments. In vitro in the presence of c-di-GMP forms filaments up to 300 nm in length with an ordered array of parallel-stacked subunits, where the TIR domains form one face of the filament and the STING domains form the other face. Antiparallel double-filament structures are also seen. 3'3'-cGAMP weakly induces filament formation, while 2'3'-cGAMP does not.

The enzyme catalyses NAD(+) + H2O = ADP-D-ribose + nicotinamide + H(+). Its activity is regulated as follows. NAD(+) hydrolase activity is strongly stimulated by c-di-GMP, weakly by 3'3'-cGAMP, very weakly by c-di-AMP and not at all by 2'3'-cGAMP. Self-association of TIR domains is required for NADase activity. Effector protein of a CBASS antiviral system with NAD(+) hydrolase activity. CBASS (cyclic oligonucleotide-based antiphage signaling system) provides immunity against bacteriophage. The CD-NTase protein synthesizes cyclic nucleotides in response to infection; these serve as specific second messenger signals. The signals activate a diverse range of effectors, leading to bacterial cell death and thus abortive phage infection. A type I-D(GG) CBASS system. In terms of biological role, upon activation by 3'3'-c-di-GMP forms filaments which hydrolyze NAD(+); filament formation is required for enzyme activation. Induction in an E.coli strain that synthesizes c-di-GMP leads to significant growth inhibition. Binds c-di-GMP and 3'3'-cGAMP (3'3'-cyclic GMP-AMP), but not c-di-AMP, 2'3'-cGAMP or cUMP-AMP. The chain is CD-NTase-associated protein 12 from Sphingobacterium faecium (strain DSM 11690 / JCM 21820 / NBRC 15299 / NCIMB 13408 / KS 0470).